The chain runs to 164 residues: S-ribosylhomocysteine lyase (164 aa).

Fe cation is bound by residues histidine 54, histidine 58, and cysteine 128.

Belongs to the LuxS family. As to quaternary structure, homodimer. The cofactor is Fe cation.

The catalysed reaction is S-(5-deoxy-D-ribos-5-yl)-L-homocysteine = (S)-4,5-dihydroxypentane-2,3-dione + L-homocysteine. In terms of biological role, involved in the synthesis of autoinducer 2 (AI-2) which is secreted by bacteria and is used to communicate both the cell density and the metabolic potential of the environment. The regulation of gene expression in response to changes in cell density is called quorum sensing. Catalyzes the transformation of S-ribosylhomocysteine (RHC) to homocysteine (HC) and 4,5-dihydroxy-2,3-pentadione (DPD). The sequence is that of S-ribosylhomocysteine lyase from Campylobacter jejuni subsp. jejuni serotype O:23/36 (strain 81-176).